The primary structure comprises 201 residues: Small ribosomal subunit protein uS4 (201 aa).

Positions 91-151 (SRLDNVVYRA…EKSQKMIWFE (61 aa)) constitute an S4 RNA-binding domain.

Belongs to the universal ribosomal protein uS4 family. In terms of assembly, part of the 30S ribosomal subunit. Contacts protein S5. The interaction surface between S4 and S5 is involved in control of translational fidelity.

Its function is as follows. One of the primary rRNA binding proteins, it binds directly to 16S rRNA where it nucleates assembly of the body of the 30S subunit. In terms of biological role, with S5 and S12 plays an important role in translational accuracy. The protein is Small ribosomal subunit protein uS4 of Corynebacterium diphtheriae (strain ATCC 700971 / NCTC 13129 / Biotype gravis).